A 272-amino-acid polypeptide reads, in one-letter code: 3-methyl-2-oxobutanoate hydroxymethyltransferase (272 aa).

Positions 51 and 90 each coordinate Mg(2+). 3-methyl-2-oxobutanoate-binding positions include 51–52 (DS), Asp-90, and Lys-118. Glu-120 is a Mg(2+) binding site. Glu-187 acts as the Proton acceptor in catalysis.

Belongs to the PanB family. Homodecamer; pentamer of dimers. It depends on Mg(2+) as a cofactor.

The protein localises to the cytoplasm. The catalysed reaction is 3-methyl-2-oxobutanoate + (6R)-5,10-methylene-5,6,7,8-tetrahydrofolate + H2O = 2-dehydropantoate + (6S)-5,6,7,8-tetrahydrofolate. It functions in the pathway cofactor biosynthesis; (R)-pantothenate biosynthesis; (R)-pantoate from 3-methyl-2-oxobutanoate: step 1/2. Catalyzes the reversible reaction in which hydroxymethyl group from 5,10-methylenetetrahydrofolate is transferred onto alpha-ketoisovalerate to form ketopantoate. This is 3-methyl-2-oxobutanoate hydroxymethyltransferase from Xylella fastidiosa (strain M12).